Reading from the N-terminus, the 172-residue chain is NADH-ubiquinone oxidoreductase chain 6 (172 aa).

5 helical membrane passes run 1–21 (MTYF…AVAS), 27–47 (YGVV…LSLG), 48–68 (VSFV…VVFV), 87–107 (VVGY…VGGF), and 138–158 (CGVG…FVVL).

Belongs to the complex I subunit 6 family.

It localises to the mitochondrion membrane. The catalysed reaction is a ubiquinone + NADH + 5 H(+)(in) = a ubiquinol + NAD(+) + 4 H(+)(out). In terms of biological role, core subunit of the mitochondrial membrane respiratory chain NADH dehydrogenase (Complex I) that is believed to belong to the minimal assembly required for catalysis. Complex I functions in the transfer of electrons from NADH to the respiratory chain. The immediate electron acceptor for the enzyme is believed to be ubiquinone. This is NADH-ubiquinone oxidoreductase chain 6 (MT-ND6) from Uria lomvia (Thick-billed murre).